The primary structure comprises 353 residues: Protein pelota homolog (353 aa).

The protein belongs to the eukaryotic release factor 1 family. Pelota subfamily. Monomer. Requires a divalent metal cation as cofactor.

The protein resides in the cytoplasm. Functionally, may function in recognizing stalled ribosomes, interact with stem-loop structures in stalled mRNA molecules, and effect endonucleolytic cleavage of the mRNA. May play a role in the release non-functional ribosomes and degradation of damaged mRNAs. Has endoribonuclease activity. This chain is Protein pelota homolog, found in Methanopyrus kandleri (strain AV19 / DSM 6324 / JCM 9639 / NBRC 100938).